A 185-amino-acid chain; its full sequence is Ribosome-recycling factor (185 aa).

It belongs to the RRF family.

The protein resides in the cytoplasm. Functionally, responsible for the release of ribosomes from messenger RNA at the termination of protein biosynthesis. May increase the efficiency of translation by recycling ribosomes from one round of translation to another. The polypeptide is Ribosome-recycling factor (Azotobacter vinelandii (strain DJ / ATCC BAA-1303)).